Consider the following 592-residue polypeptide: Glutamine--fructose-6-phosphate aminotransferase [isomerizing] (592 aa).

Catalysis depends on Cys-2, which acts as the Nucleophile; for GATase activity. The 216-residue stretch at 2–217 folds into the Glutamine amidotransferase type-2 domain; that stretch reads CGIVGYVGRD…DGEIADLTPD (216 aa). 2 SIS domains span residues 277–416 and 441–582; these read IPFK…EREN and VAEK…VDQP. The active-site For Fru-6P isomerization activity is the Lys-587.

In terms of assembly, homodimer.

The protein localises to the cytoplasm. The catalysed reaction is D-fructose 6-phosphate + L-glutamine = D-glucosamine 6-phosphate + L-glutamate. Its function is as follows. Catalyzes the first step in hexosamine metabolism, converting fructose-6P into glucosamine-6P using glutamine as a nitrogen source. In Aquifex aeolicus (strain VF5), this protein is Glutamine--fructose-6-phosphate aminotransferase [isomerizing].